Consider the following 260-residue polypeptide: Small ribosomal subunit protein uS2 (260 aa).

The disordered stretch occupies residues 225 to 260; the sequence is KGQTQTEAAPNAQAAPEAAAPAEQPAEEAAAASSEG. A compositionally biased stretch (low complexity) spans 231-260; sequence EAAPNAQAAPEAAAPAEQPAEEAAAASSEG.

The protein belongs to the universal ribosomal protein uS2 family.

The protein is Small ribosomal subunit protein uS2 of Rhodopirellula baltica (strain DSM 10527 / NCIMB 13988 / SH1).